A 583-amino-acid polypeptide reads, in one-letter code: Inactive carboxylesterase-like protein VdtD (583 aa).

The first 23 residues, 1-23 (MFMTQIVFGIAPTLLKTFSHLTA), serve as a signal peptide directing secretion. N84, N109, N221, N265, N307, N350, N388, N448, and N468 each carry an N-linked (GlcNAc...) asparagine glycan.

It belongs to the type-B carboxylesterase/lipase family.

Its pathway is secondary metabolite biosynthesis. Functionally, inactive carboxylesterase-like protein; part of the gene cluster that mediates the biosynthesis of viriditoxin, one of the 'classical' secondary metabolites produced by fungi and that has antibacterial activity. The first step is performed by the polyketide synthase VdtA which condenses one acetyl-CoA and 6 malonyl-CoA units to form the heptaketide monomer backbone of viriditoxin. The product of VdtA is then O-methylated on C7 by the O-methyltransferase VdtC. The O-methyl group is important for the stereoselective coupling of the monomers at the final step of viriditoxin biosynthesis. The short-chain dehydrogenase/reductase VdtF then acts as a stereospecific reductase converting the pyrone to dihydropyrone via the reduction of the C3-C4 double bond. The FAD-binding monooxygenase VdtE then converts the ketone group into a methyl-ester group to yield semi-viriditoxin. Finally, the laccase VdtB is involved in dimerization of 2 semi-viriditoxin molecules to yield the final viriditoxin. VdtB is responsible for the regioselective 6,6'-coupling of semi-viriditoxin, which yields (M)-viriditoxin and (P)-viriditoxin at a ratio of 1:2. The non-catalytic carboxylesterase-like protein VdtD affects the stereochemistical outcome of the coupling. The highly reducing polyketide synthase VdtX is not involved in viriditoxin synthesis, but might possibly play a role in the production of additional metabolites not identified yet. In Byssochlamys spectabilis (Paecilomyces variotii), this protein is Inactive carboxylesterase-like protein VdtD.